We begin with the raw amino-acid sequence, 140 residues long: Pro-variola growth factor (140 aa).

An N-terminal signal peptide occupies residues 1 to 18 (MSMKYLMLLFAAMIIRSF). Residues 19 to 100 (ANSGNAIETT…SEKPNTTTSY (82 aa)) lie on the Extracellular side of the membrane. N-linked (GlcNAc...) asparagine; by host glycosylation is present at Asn34. The region spanning 41-81 (AIRLCGPEGNGYCFHGICIHARDIDGMYCRCSHGYTGIRCQ) is the EGF-like domain. Intrachain disulfides connect Cys45–Cys58, Cys53–Cys69, and Cys71–Cys80. N-linked (GlcNAc...) asparagine; by host glycosylation occurs at Asn95. The chain crosses the membrane as a helical span at residues 101–121 (IPSPGIVLVLLVSIIMCCLLF). Topologically, residues 122–140 (VYRFTRRTNKLPLQDMVVP) are cytoplasmic.

This sequence belongs to the orthopoxvirus OPG019 family. In terms of assembly, variola growth factor interacts with host EGFR and promotes EGFR dimerization.

It localises to the host membrane. The protein localises to the secreted. Stimulates cellular proliferation (hyperplasia)and mobility around infected cells to promote rapid and efficient spread of infection. This effect is beneficial for virus replication in vivo, because poxviruses replicate possibly better in proliferating cells than in quiescent cells. Acts by binding host EGFR, inducing its dimerization, autophosphorylation and leading to activation of several cellular pathways regulating cell proliferation or cell survival. The activation by host EGFR of mitogen activated protein kinases (MAPK) and extracellular-signal regulated kinases (ERK) are essential for the positive effect of vaccinia growth factor on poxvirus virulence in vivo. The polypeptide is Pro-variola growth factor (OPG019) (Variola virus).